The following is a 306-amino-acid chain: MNSASKLFVVLASPANQRNMATLKDLKIRLGTVKTISKLTKTLHMVASSKLRSAEKKAEESGPYSVGPQKVLGVVETADAFNTATEPIEDRSNKQLLIAITTDTGMCGPVNHQIIKTIKALLKDDAKQEILVSTTGLKGVAPIVADFPNQFLINGRDFGKADYSFPEVLLFLNEIISKVPNYDSALVVYNKFKNALSYSVDRQFIPGFNLLELNRDKFYEYTTSEDRAATMKDLSEFYLASSLWTGLYQNRASEMAARMVAMDNASKNGESISQALGLQYNRARQAMITSELIEIVSGASAIESSD.

The N-terminal 17 residues, 1–17 (MNSASKLFVVLASPANQ), are a transit peptide targeting the mitochondrion.

The protein belongs to the ATPase gamma chain family. Component of the ATP synthase complex composed at least of ATP5F1A/subunit alpha, ATP5F1B/subunit beta, ATP5MC1/subunit c (homooctomer), MT-ATP6/subunit a, MT-ATP8/subunit 8, ATP5ME/subunit e, ATP5MF/subunit f, ATP5MG/subunit g, ATP5MK/subunit k, ATP5MJ/subunit j, ATP5F1C/subunit gamma, ATP5F1D/subunit delta, ATP5F1E/subunit epsilon, ATP5PF/subunit F6, ATP5PB/subunit b, ATP5PD/subunit d, ATP5PO/subunit OSCP. ATP synthase complex consists of a soluble F(1) head domain (subunits alpha(3) and beta(3)) - the catalytic core - and a membrane F(0) domain - the membrane proton channel (subunits c, a, 8, e, f, g, k and j). These two domains are linked by a central stalk (subunits gamma, delta, and epsilon) rotating inside the F1 region and a stationary peripheral stalk (subunits F6, b, d, and OSCP).

Its subcellular location is the mitochondrion inner membrane. Subunit gamma, of the mitochondrial membrane ATP synthase complex (F(1)F(0) ATP synthase or Complex V) that produces ATP from ADP in the presence of a proton gradient across the membrane which is generated by electron transport complexes of the respiratory chain. ATP synthase complex consist of a soluble F(1) head domain - the catalytic core - and a membrane F(1) domain - the membrane proton channel. These two domains are linked by a central stalk rotating inside the F(1) region and a stationary peripheral stalk. During catalysis, ATP synthesis in the catalytic domain of F(1) is coupled via a rotary mechanism of the central stalk subunits to proton translocation. In vivo, can only synthesize ATP although its ATP hydrolase activity can be activated artificially in vitro. With the central stalk subunit delta, is essential for the biogenesis of F(1) catalytic part of the ATP synthase complex namely in the formation of F1 assembly intermediate. The chain is ATP synthase F(1) complex subunit gamma, mitochondrial from Dictyostelium discoideum (Social amoeba).